Consider the following 317-residue polypeptide: Ribosomal RNA small subunit methyltransferase A (317 aa).

S-adenosyl-L-methionine-binding residues include Asn37, Val39, Gly64, Glu85, Asp115, and Asn134. A disordered region spans residues 293 to 317 (GGSDEATSTGRDARAPDISGHASAS).

It belongs to the class I-like SAM-binding methyltransferase superfamily. rRNA adenine N(6)-methyltransferase family. RsmA subfamily.

The protein localises to the cytoplasm. It carries out the reaction adenosine(1518)/adenosine(1519) in 16S rRNA + 4 S-adenosyl-L-methionine = N(6)-dimethyladenosine(1518)/N(6)-dimethyladenosine(1519) in 16S rRNA + 4 S-adenosyl-L-homocysteine + 4 H(+). Specifically dimethylates two adjacent adenosines (A1518 and A1519) in the loop of a conserved hairpin near the 3'-end of 16S rRNA in the 30S particle. May play a critical role in biogenesis of 30S subunits. This Mycobacterium bovis (strain BCG / Tokyo 172 / ATCC 35737 / TMC 1019) protein is Ribosomal RNA small subunit methyltransferase A.